The chain runs to 321 residues: Anthranilate phosphoribosyltransferase (321 aa).

5-phospho-alpha-D-ribose 1-diphosphate contacts are provided by residues Gly-72, 75-76, Thr-80, 82-85, 99-107, and Ser-111; these read GD, NVST, and KHGNVSVTS. Residue Gly-72 coordinates anthranilate. Ser-84 lines the Mg(2+) pocket. An anthranilate-binding site is contributed by Asn-102. Arg-157 serves as a coordination point for anthranilate. 2 residues coordinate Mg(2+): Asp-216 and Glu-217.

The protein belongs to the anthranilate phosphoribosyltransferase family. As to quaternary structure, homodimer. It depends on Mg(2+) as a cofactor.

It catalyses the reaction N-(5-phospho-beta-D-ribosyl)anthranilate + diphosphate = 5-phospho-alpha-D-ribose 1-diphosphate + anthranilate. Its pathway is amino-acid biosynthesis; L-tryptophan biosynthesis; L-tryptophan from chorismate: step 2/5. In terms of biological role, catalyzes the transfer of the phosphoribosyl group of 5-phosphorylribose-1-pyrophosphate (PRPP) to anthranilate to yield N-(5'-phosphoribosyl)-anthranilate (PRA). This Methanococcus vannielii (strain ATCC 35089 / DSM 1224 / JCM 13029 / OCM 148 / SB) protein is Anthranilate phosphoribosyltransferase.